We begin with the raw amino-acid sequence, 897 residues long: Macoilin (897 aa).

The next 4 membrane-spanning stretches (helical) occupy residues isoleucine 113–isoleucine 133, glutamine 157–isoleucine 177, proline 181–proline 201, and leucine 204–methionine 224. Polar residues-rich tracts occupy residues isoleucine 291–lysine 304 and glycine 329–proline 338. A disordered region spans residues isoleucine 291–glutamine 375. The segment covering aspartate 351–aspartate 361 has biased composition (acidic residues). Residues glycine 379–phenylalanine 399 form a helical membrane-spanning segment. Polar residues predominate over residues threonine 403–glutamine 413. Disordered stretches follow at residues threonine 403–aspartate 535 and asparagine 724–proline 770. Over residues isoleucine 414 to aspartate 424 the composition is skewed to acidic residues. Polar residues predominate over residues threonine 432–arginine 451. Composition is skewed to low complexity over residues serine 452–glycine 467 and serine 475–histidine 490. Residues aspartate 503–serine 726 are a coiled coil. Residues threonine 510–aspartate 535 are compositionally biased toward basic and acidic residues. Positions glutamate 734–glutamine 761 are enriched in polar residues.

Strong expression in many neurons, very weak expression is also detected in others tissues.

It localises to the rough endoplasmic reticulum membrane. It is found in the nucleus membrane. In terms of biological role, plays a role in the regulation of neuronal activity. In AWA and AWC neurons, plays a role in regulating olfactory adaptation by controlling the forgetting sensory responses to odorants such as diacetyl and isoamyl alcohol. May play a role in regulating daf-7 expression in ASI neurons in response to bacterial small RNAs. In ASI neurons, promotes dauer formation in response to pheromones such as the ascarosides ascr#2 and ascr#3. This is Macoilin from Caenorhabditis elegans.